The chain runs to 380 residues: Succinyl-diaminopimelate desuccinylase (380 aa).

Residue His66 coordinates Zn(2+). Asp68 is an active-site residue. Asp99 is a binding site for Zn(2+). The active-site Proton acceptor is the Glu135. Zn(2+) contacts are provided by Glu136, Glu164, and His350.

It belongs to the peptidase M20A family. DapE subfamily. Homodimer. Zn(2+) is required as a cofactor. Co(2+) serves as cofactor.

The catalysed reaction is N-succinyl-(2S,6S)-2,6-diaminopimelate + H2O = (2S,6S)-2,6-diaminopimelate + succinate. It participates in amino-acid biosynthesis; L-lysine biosynthesis via DAP pathway; LL-2,6-diaminopimelate from (S)-tetrahydrodipicolinate (succinylase route): step 3/3. In terms of biological role, catalyzes the hydrolysis of N-succinyl-L,L-diaminopimelic acid (SDAP), forming succinate and LL-2,6-diaminopimelate (DAP), an intermediate involved in the bacterial biosynthesis of lysine and meso-diaminopimelic acid, an essential component of bacterial cell walls. The sequence is that of Succinyl-diaminopimelate desuccinylase from Magnetococcus marinus (strain ATCC BAA-1437 / JCM 17883 / MC-1).